The chain runs to 75 residues: UPF0181 protein ETA_15280 (75 aa).

Belongs to the UPF0181 family.

The protein is UPF0181 protein ETA_15280 of Erwinia tasmaniensis (strain DSM 17950 / CFBP 7177 / CIP 109463 / NCPPB 4357 / Et1/99).